Consider the following 200-residue polypeptide: Transcriptional repressor NrdR (200 aa).

The segment at 3–34 (CPRCGKQEIRVLESRSAEGGQSVRRRRECMSC) is a zinc-finger region. Residues 49–139 (IMVIKRDGSR…VYRKFQGIKD (91 aa)) form the ATP-cone domain. The interval 158-200 (LERPLRNSPPSESESTASPDWVGGIPQLLDQNDTSSNLSEIPK) is disordered. Positions 186–200 (LDQNDTSSNLSEIPK) are enriched in polar residues.

The protein belongs to the NrdR family. The cofactor is Zn(2+).

Negatively regulates transcription of bacterial ribonucleotide reductase nrd genes and operons by binding to NrdR-boxes. In Synechococcus sp. (strain JA-3-3Ab) (Cyanobacteria bacterium Yellowstone A-Prime), this protein is Transcriptional repressor NrdR.